We begin with the raw amino-acid sequence, 177 residues long: Chorismate pyruvate-lyase (177 aa).

Methionine 36, arginine 78, leucine 116, and glutamate 157 together coordinate substrate.

The protein belongs to the UbiC family. In terms of assembly, monomer.

It is found in the cytoplasm. The catalysed reaction is chorismate = 4-hydroxybenzoate + pyruvate. Its pathway is cofactor biosynthesis; ubiquinone biosynthesis. Its function is as follows. Removes the pyruvyl group from chorismate, with concomitant aromatization of the ring, to provide 4-hydroxybenzoate (4HB) for the ubiquinone pathway. The chain is Chorismate pyruvate-lyase from Pectobacterium carotovorum subsp. carotovorum (strain PC1).